Reading from the N-terminus, the 162-residue chain is Regulatory protein RecX (162 aa).

It belongs to the RecX family.

The protein localises to the cytoplasm. Functionally, modulates RecA activity. The protein is Regulatory protein RecX of Xanthomonas oryzae pv. oryzae (strain PXO99A).